Here is a 941-residue protein sequence, read N- to C-terminus: Glycine dehydrogenase (decarboxylating) (941 aa).

Position 692 is an N6-(pyridoxal phosphate)lysine (Lys692).

Belongs to the GcvP family. In terms of assembly, the glycine cleavage system is composed of four proteins: P, T, L and H. Pyridoxal 5'-phosphate is required as a cofactor.

It carries out the reaction N(6)-[(R)-lipoyl]-L-lysyl-[glycine-cleavage complex H protein] + glycine + H(+) = N(6)-[(R)-S(8)-aminomethyldihydrolipoyl]-L-lysyl-[glycine-cleavage complex H protein] + CO2. Functionally, the glycine cleavage system catalyzes the degradation of glycine. The P protein binds the alpha-amino group of glycine through its pyridoxal phosphate cofactor; CO(2) is released and the remaining methylamine moiety is then transferred to the lipoamide cofactor of the H protein. This is Glycine dehydrogenase (decarboxylating) from Mycobacterium bovis (strain ATCC BAA-935 / AF2122/97).